The chain runs to 143 residues: Transcriptional regulator MraZ (143 aa).

SpoVT-AbrB domains are found at residues 5–47 (EYEH…PRSV) and 76–119 (AADM…APRR).

It belongs to the MraZ family. Forms oligomers.

Its subcellular location is the cytoplasm. The protein localises to the nucleoid. This is Transcriptional regulator MraZ from Roseiflexus sp. (strain RS-1).